The primary structure comprises 319 residues: ATP-dependent 6-phosphofructokinase (319 aa).

Residue Gly-11 coordinates ATP. 21–25 (RAVVR) serves as a coordination point for ADP. ATP contacts are provided by residues 72 to 73 (RC) and 102 to 105 (GDGS). Mg(2+) is bound at residue Asp-103. Residue 125-127 (TID) coordinates substrate. Residue Asp-127 is the Proton acceptor of the active site. Arg-154 contacts ADP. Position 169 to 171 (169 to 171 (MGR)) interacts with substrate. Residues 185 to 187 (GAE), Arg-211, and 213 to 215 (KKH) each bind ADP. Substrate contacts are provided by residues Glu-222, Arg-243, and 249 to 252 (HIQR).

Belongs to the phosphofructokinase type A (PFKA) family. ATP-dependent PFK group I subfamily. Prokaryotic clade 'B1' sub-subfamily. Homotetramer. Requires Mg(2+) as cofactor.

It is found in the cytoplasm. The enzyme catalyses beta-D-fructose 6-phosphate + ATP = beta-D-fructose 1,6-bisphosphate + ADP + H(+). It participates in carbohydrate degradation; glycolysis; D-glyceraldehyde 3-phosphate and glycerone phosphate from D-glucose: step 3/4. Its activity is regulated as follows. Allosterically activated by ADP and other diphosphonucleosides, and allosterically inhibited by phosphoenolpyruvate. In terms of biological role, catalyzes the phosphorylation of D-fructose 6-phosphate to fructose 1,6-bisphosphate by ATP, the first committing step of glycolysis. This is ATP-dependent 6-phosphofructokinase from Lysinibacillus sphaericus (Bacillus sphaericus).